The chain runs to 374 residues: N-acetyldiaminopimelate deacetylase (374 aa).

D69 is a catalytic residue. The active-site Proton acceptor is the E128.

Belongs to the peptidase M20A family. N-acetyldiaminopimelate deacetylase subfamily.

The catalysed reaction is N-acetyl-(2S,6S)-2,6-diaminopimelate + H2O = (2S,6S)-2,6-diaminopimelate + acetate. It participates in amino-acid biosynthesis; L-lysine biosynthesis via DAP pathway; LL-2,6-diaminopimelate from (S)-tetrahydrodipicolinate (acetylase route): step 3/3. Functionally, catalyzes the conversion of N-acetyl-diaminopimelate to diaminopimelate and acetate. This Bacillus subtilis (strain 168) protein is N-acetyldiaminopimelate deacetylase (ykuR).